A 437-amino-acid chain; its full sequence is GTPase Obg (437 aa).

One can recognise an Obg domain in the interval 2-160 (SMFLDTAKIS…RQLELELKIL (159 aa)). Residues 161–338 (ADVGLVGFPS…LLEATAELLA (178 aa)) form the OBG-type G domain. Residues 167–174 (GFPSVGKS), 192–196 (FTTIV), 214–217 (DLPG), 284–287 (NKMD), and 319–321 (SSL) each bind GTP. Mg(2+) contacts are provided by Ser174 and Thr194. The OCT domain maps to 359 to 437 (GFAETEKNFE…IGKFEFEFVD (79 aa)).

This sequence belongs to the TRAFAC class OBG-HflX-like GTPase superfamily. OBG GTPase family. Monomer. It depends on Mg(2+) as a cofactor.

The protein localises to the cytoplasm. Its function is as follows. An essential GTPase which binds GTP, GDP and possibly (p)ppGpp with moderate affinity, with high nucleotide exchange rates and a fairly low GTP hydrolysis rate. Plays a role in control of the cell cycle, stress response, ribosome biogenesis and in those bacteria that undergo differentiation, in morphogenesis control. The polypeptide is GTPase Obg (Streptococcus pyogenes serotype M49 (strain NZ131)).